The chain runs to 614 residues: UvrABC system protein C (614 aa).

The 79-residue stretch at 26–104 (NLPGVYKMLG…IKEYRPPYNV (79 aa)) folds into the GIY-YIG domain. Residues 215–250 (SDIHSALIEKMEASAEELDFEKAVFYRDQLSMLREV) form the UVR domain.

This sequence belongs to the UvrC family. Interacts with UvrB in an incision complex.

The protein localises to the cytoplasm. The UvrABC repair system catalyzes the recognition and processing of DNA lesions. UvrC both incises the 5' and 3' sides of the lesion. The N-terminal half is responsible for the 3' incision and the C-terminal half is responsible for the 5' incision. The protein is UvrABC system protein C of Psychrobacter arcticus (strain DSM 17307 / VKM B-2377 / 273-4).